A 346-amino-acid chain; its full sequence is Aspartate-semialdehyde dehydrogenase (346 aa).

Residues 12–15 (SGAV) and 40–41 (RS) contribute to the NADP(+) site. Residue arginine 101 participates in phosphate binding. Cysteine 131 serves as the catalytic Acyl-thioester intermediate. Position 158 (glutamine 158) interacts with substrate. 161–162 (SG) is an NADP(+) binding site. Lysine 225 serves as a coordination point for phosphate. A substrate-binding site is contributed by arginine 246. Catalysis depends on histidine 253, which acts as the Proton acceptor. Residue glutamine 326 participates in NADP(+) binding.

The protein belongs to the aspartate-semialdehyde dehydrogenase family. As to quaternary structure, homodimer.

It catalyses the reaction L-aspartate 4-semialdehyde + phosphate + NADP(+) = 4-phospho-L-aspartate + NADPH + H(+). It functions in the pathway amino-acid biosynthesis; L-lysine biosynthesis via DAP pathway; (S)-tetrahydrodipicolinate from L-aspartate: step 2/4. Its pathway is amino-acid biosynthesis; L-methionine biosynthesis via de novo pathway; L-homoserine from L-aspartate: step 2/3. It participates in amino-acid biosynthesis; L-threonine biosynthesis; L-threonine from L-aspartate: step 2/5. Catalyzes the NADPH-dependent formation of L-aspartate-semialdehyde (L-ASA) by the reductive dephosphorylation of L-aspartyl-4-phosphate. The chain is Aspartate-semialdehyde dehydrogenase from Helicobacter pylori (strain J99 / ATCC 700824) (Campylobacter pylori J99).